The primary structure comprises 1158 residues: Protein transport protein Sec31B (1158 aa).

WD repeat units follow at residues 4-47, 65-110, 119-159, 166-206, 209-254, 258-298, and 301-341; these read KELE…EIFE, VSSR…SSGK, KHTG…VPMT, NPPE…PIIK, SHSS…SPLK, SHSR…VVYK, and TQSS…WEAQ. One copy of the WD 8; interaction with SEC13 repeat lies at 376–407; it reads SFAFGGKLVTFGLPSIPVQPVAQACSRPVFIS. Disordered stretches follow at residues 485 to 520, 797 to 843, and 968 to 1010; these read LKSD…HTAK, TSSY…SSDH, and GPQD…PEPQ. Residues 822-840 show a composition bias toward low complexity; the sequence is QPSSVMPFSPSQPSPSQGS.

The protein belongs to the WD repeat SEC31 family. In terms of assembly, COPII is composed of at least 5 proteins: the SEC23/24 complex, the SEC13/31 complex and SAR1. SEC13 and SEC31 make a 2:2 tetramer that forms the edge element of the COPII outer coat. The tetramer self-assembles in multiple copies to form the complete polyhedral cage. Interacts (via WD 8) with SEC13. Interacts with SEC31A. Monoubiquitinated by the BCR(KLHL12) E3 ubiquitin ligase complex, leading to regulate the size of COPII coats.

The protein resides in the cytoplasm. Its subcellular location is the cytoplasmic vesicle. The protein localises to the COPII-coated vesicle membrane. It localises to the endoplasmic reticulum membrane. As a component of the coat protein complex II (COPII), may function in vesicle budding and cargo export from the endoplasmic reticulum. In Mus musculus (Mouse), this protein is Protein transport protein Sec31B (Sec31b).